The primary structure comprises 334 residues: Anthranilate phosphoribosyltransferase (334 aa).

Residues G81, 84–85 (GD), T89, 91–94 (NIST), 109–117 (KHGSRSVSS), and A121 each bind 5-phospho-alpha-D-ribose 1-diphosphate. Position 81 (G81) interacts with anthranilate. S93 contributes to the Mg(2+) binding site. R167 contributes to the anthranilate binding site. Residues D225 and E226 each contribute to the Mg(2+) site.

It belongs to the anthranilate phosphoribosyltransferase family. Homodimer. The cofactor is Mg(2+).

It carries out the reaction N-(5-phospho-beta-D-ribosyl)anthranilate + diphosphate = 5-phospho-alpha-D-ribose 1-diphosphate + anthranilate. It participates in amino-acid biosynthesis; L-tryptophan biosynthesis; L-tryptophan from chorismate: step 2/5. Its function is as follows. Catalyzes the transfer of the phosphoribosyl group of 5-phosphorylribose-1-pyrophosphate (PRPP) to anthranilate to yield N-(5'-phosphoribosyl)-anthranilate (PRA). The protein is Anthranilate phosphoribosyltransferase of Actinobacillus pleuropneumoniae serotype 5b (strain L20).